A 161-amino-acid polypeptide reads, in one-letter code: Phosphopantetheine adenylyltransferase (161 aa).

Threonine 10 serves as a coordination point for substrate. Residues 10 to 11 (TF) and histidine 18 each bind ATP. The substrate site is built by lysine 42, leucine 74, and arginine 88. ATP-binding positions include 89-91 (GVR), glutamate 99, and 123-129 (YIHISST).

It belongs to the bacterial CoaD family. Homohexamer. Requires Mg(2+) as cofactor.

It is found in the cytoplasm. It carries out the reaction (R)-4'-phosphopantetheine + ATP + H(+) = 3'-dephospho-CoA + diphosphate. It functions in the pathway cofactor biosynthesis; coenzyme A biosynthesis; CoA from (R)-pantothenate: step 4/5. Functionally, reversibly transfers an adenylyl group from ATP to 4'-phosphopantetheine, yielding dephospho-CoA (dPCoA) and pyrophosphate. The protein is Phosphopantetheine adenylyltransferase of Aquifex aeolicus (strain VF5).